The primary structure comprises 363 residues: Src kinase-associated phosphoprotein 1 (363 aa).

The tract at residues 62 to 94 is disordered; sequence PFPSDYKEEDGSDDNRSSSLGRSAQSDDASLAS. A compositionally biased stretch (low complexity) spans 84 to 94; sequence SAQSDDASLAS. The PH domain maps to 118–221; the sequence is NVLKQGYLEK…WVDQIKIVLR (104 aa). Positions 227 to 273 are disordered; that stretch reads VIPVDDEEEEEEEEETYDDIEGEGGPPLPQPLSGTWGRGGDTGAADE. The segment covering 230 to 248 has biased composition (acidic residues); the sequence is VDDEEEEEEEEETYDDIEG. The SH3 domain maps to 301-362; the sequence is EYANYYQGLW…PKDFLHPAYI (62 aa).

It belongs to the SKAP family. Homodimer. Phosphorylated on tyrosines.

The protein localises to the cytoplasm. It is found in the nucleus. Its subcellular location is the cell membrane. Functionally, positively regulates T-cell receptor signaling. Required for optimal conjugation between T-cells and antigen-presenting cells. The chain is Src kinase-associated phosphoprotein 1 (skap1) from Takifugu rubripes (Japanese pufferfish).